The sequence spans 103 residues: Carboxysome shell protein CcmK2 (103 aa).

Positions 4 to 90 (AVGMIETRGF…PHENLEYVLP (87 aa)) constitute a BMC domain.

This sequence belongs to the bacterial microcompartments protein family. CcmK subfamily. In terms of assembly, homohexamer, might also make dodecamers. Interacts with full-length CcmM. Forms mixed heterohexamers of all possible stoichiometries with CcmK1, which might form dodecamers. Only very weak interactions with CcmK3 and CcmK4 were seen.

The protein resides in the carboxysome. Its function is as follows. One of the shell proteins of the carboxysome, a polyhedral inclusion where RuBisCO (ribulose bisphosphate carboxylase, rbcL-rbcS) is sequestered. The central pore probably regulates metabolite flux. Hexamers make sheets that form the facets of the polyhedral carboxysome. The protein is Carboxysome shell protein CcmK2 of Synechocystis sp. (strain ATCC 27184 / PCC 6803 / Kazusa).